The following is a 479-amino-acid chain: Adenosylhomocysteinase (479 aa).

Residues T56, D134, and E200 each coordinate substrate. 201–203 lines the NAD(+) pocket; it reads TTT. Substrate-binding residues include K230 and D234. NAD(+) contacts are provided by residues N235, 264-269, E287, N322, 343-345, and N391; these read GYGDVG and IGH.

This sequence belongs to the adenosylhomocysteinase family. In terms of assembly, homotetramer. It depends on NAD(+) as a cofactor.

It catalyses the reaction S-adenosyl-L-homocysteine + H2O = L-homocysteine + adenosine. Its pathway is amino-acid biosynthesis; L-homocysteine biosynthesis; L-homocysteine from S-adenosyl-L-homocysteine: step 1/1. Functionally, adenosylhomocysteine is a competitive inhibitor of S-adenosyl-L-methionine-dependent methyl transferase reactions; therefore adenosylhomocysteinase may play a key role in the control of methylations via regulation of the intracellular concentration of adenosylhomocysteine. The protein is Adenosylhomocysteinase of Plasmodium falciparum (isolate 3D7).